The sequence spans 97 residues: Large ribosomal subunit protein bL28 (97 aa).

It belongs to the bacterial ribosomal protein bL28 family.

This chain is Large ribosomal subunit protein bL28, found in Brucella ovis (strain ATCC 25840 / 63/290 / NCTC 10512).